The following is a 469-amino-acid chain: COP9 signalosome complex subunit 5 (469 aa).

One can recognise an MPN domain in the interval 63 to 200 (TYISSLALCK…IGAFRTFPDN (138 aa)). Zn(2+) is bound by residues H146, H148, and D159. Residues 146 to 159 (HSHPGYGCWLSGID) carry the JAMM motif motif. 2 disordered regions span residues 201 to 220 (YKSP…PPSK) and 331 to 404 (YDSF…KRPM). The span at 344 to 353 (DEMDDESDLD) shows a compositional bias: acidic residues.

It belongs to the peptidase M67A family. CSN5 subfamily. In terms of assembly, component of the COP9 signalosome (CSN) complex.

It localises to the cytoplasm. The protein resides in the nucleus. Its function is as follows. Catalytic Component of the COP9 signalosome (CSN) complex that acts as an regulator of the ubiquitin (Ubl) conjugation pathway by mediating the deneddylation of the cullin subunit of SCF-type E3 ubiquitin-protein ligase complexes. The CSN complex is involved in the regulation of the mating pheromone response. The chain is COP9 signalosome complex subunit 5 (RRI1) from Debaryomyces hansenii (strain ATCC 36239 / CBS 767 / BCRC 21394 / JCM 1990 / NBRC 0083 / IGC 2968) (Yeast).